A 156-amino-acid polypeptide reads, in one-letter code: Small ribosomal subunit protein uS7 (156 aa).

The protein belongs to the universal ribosomal protein uS7 family. In terms of assembly, part of the 30S ribosomal subunit. Contacts proteins S9 and S11.

In terms of biological role, one of the primary rRNA binding proteins, it binds directly to 16S rRNA where it nucleates assembly of the head domain of the 30S subunit. Is located at the subunit interface close to the decoding center, probably blocks exit of the E-site tRNA. In Clostridium botulinum (strain 657 / Type Ba4), this protein is Small ribosomal subunit protein uS7.